An 87-amino-acid polypeptide reads, in one-letter code: DNA-directed RNA polymerase subunit Rpo5 (87 aa).

This sequence belongs to the archaeal Rpo5/eukaryotic RPB5 RNA polymerase subunit family. In terms of assembly, part of the RNA polymerase complex.

It localises to the cytoplasm. The enzyme catalyses RNA(n) + a ribonucleoside 5'-triphosphate = RNA(n+1) + diphosphate. DNA-dependent RNA polymerase (RNAP) catalyzes the transcription of DNA into RNA using the four ribonucleoside triphosphates as substrates. This chain is DNA-directed RNA polymerase subunit Rpo5, found in Thermoplasma volcanium (strain ATCC 51530 / DSM 4299 / JCM 9571 / NBRC 15438 / GSS1).